We begin with the raw amino-acid sequence, 471 residues long: Ribosome biogenesis protein YTM1 (471 aa).

The tract at residues 10–92 is ubiquitin-like (UBL) domain; the sequence is VTARFTTRDE…ETRLEVEYTR (83 aa). WD repeat units lie at residues 119-158, 165-203, and 210-249; these read SRAGAWSGGSVQSGQERILSASYDGLVRVWNTSGDVLATS, GRITSLKSAKWLSDKKIVAAGMDNTVRVFKYDEDTRTIT, and SHRWGVEDVAVHGPSSRILSASSDNTISLFSSNAKENPVA. The disordered stretch occupies residues 245 to 274; it reads ENPVAPSSLLPNSTAASNKRQKLSKPDRTV. Residues 253 to 262 are compositionally biased toward polar residues; the sequence is LLPNSTAASN. 4 WD repeats span residues 285 to 325, 327 to 366, 372 to 412, and 436 to 471; these read GHSS…CVDT, TTGHSLLSLCAIPSRNLIATGTSARHITLIDPRVSATQIS, GHKN…TGGQ, and GHGEGVKVFGVRWDKDVGIVSGGEDKKIQINRALGS. Residues 412–440 are disordered; the sequence is QVGEGQQGESVHTIHRQGQSGPGKGHGEG.

It belongs to the WD repeat WDR12/YTM1 family. Component of the NOP7 complex, composed of ERB1, NOP7 and YTM1. The complex is held together by ERB1, which interacts with NOP7 via its N-terminal domain and with YTM1 via a high-affinity interaction between the seven-bladed beta-propeller domains of the 2 proteins. The NOP7 complex associates with the 66S pre-ribosome. Interacts (via UBL domain) with MDN1 (via VWFA/MIDAS domain).

It is found in the nucleus. It localises to the nucleolus. The protein resides in the nucleoplasm. Functionally, component of the NOP7 complex, which is required for maturation of the 25S and 5.8S ribosomal RNAs and formation of the 60S ribosome. The protein is Ribosome biogenesis protein YTM1 of Phaeosphaeria nodorum (strain SN15 / ATCC MYA-4574 / FGSC 10173) (Glume blotch fungus).